Here is a 109-residue protein sequence, read N- to C-terminus: UPF0060 membrane protein PA14_21660 (109 aa).

Helical transmembrane passes span 5–25, 27–47, 59–79, and 84–104; these read LWFV…YLWL, LGKS…FALL, AYAA…AFVE, and LWSD…VLFG.

The protein belongs to the UPF0060 family.

It is found in the cell inner membrane. This is UPF0060 membrane protein PA14_21660 from Pseudomonas aeruginosa (strain UCBPP-PA14).